The chain runs to 204 residues: Protein GrpE (204 aa).

The segment covering 1-12 has biased composition (basic and acidic residues); sequence MSNEEQAQKDDA. Residues 1 to 32 form a disordered region; sequence MSNEEQAQKDDAQPVNEAAIDATAEQADAEVE. The segment covering 17–26 has biased composition (low complexity); that stretch reads EAAIDATAEQ.

Belongs to the GrpE family. Homodimer.

The protein localises to the cytoplasm. Functionally, participates actively in the response to hyperosmotic and heat shock by preventing the aggregation of stress-denatured proteins, in association with DnaK and GrpE. It is the nucleotide exchange factor for DnaK and may function as a thermosensor. Unfolded proteins bind initially to DnaJ; upon interaction with the DnaJ-bound protein, DnaK hydrolyzes its bound ATP, resulting in the formation of a stable complex. GrpE releases ADP from DnaK; ATP binding to DnaK triggers the release of the substrate protein, thus completing the reaction cycle. Several rounds of ATP-dependent interactions between DnaJ, DnaK and GrpE are required for fully efficient folding. In Pseudoalteromonas atlantica (strain T6c / ATCC BAA-1087), this protein is Protein GrpE.